Here is a 53-residue protein sequence, read N- to C-terminus: Large ribosomal subunit protein bL33B (53 aa).

The protein belongs to the bacterial ribosomal protein bL33 family.

The chain is Large ribosomal subunit protein bL33B from Sorangium cellulosum (strain So ce56) (Polyangium cellulosum (strain So ce56)).